The following is a 180-amino-acid chain: MSRIGRLPIKIPDTVKIDVKDNLVIVEGIRGRLVQNIKDSINVKVENGSVIVGRVFNDKKAKAYHGLYRSLIFNMIKGVTEGFSKSLTINGIGYRAEQQGNSLFLSLGYSTQFEYVIPDGVSVKLDGNTKISVEGIDKFKVGQVAAEIRSLKKPEPYKGKGIKYDNEIIRRKVGKSGVKK.

This sequence belongs to the universal ribosomal protein uL6 family. Part of the 50S ribosomal subunit.

In terms of biological role, this protein binds to the 23S rRNA, and is important in its secondary structure. It is located near the subunit interface in the base of the L7/L12 stalk, and near the tRNA binding site of the peptidyltransferase center. This Borreliella afzelii (strain PKo) (Borrelia afzelii) protein is Large ribosomal subunit protein uL6.